The sequence spans 328 residues: 5'-AMP-activated protein kinase subunit gamma (328 aa).

4 CBS domains span residues 42 to 103 (VSYR…PDKF), 123 to 186 (IQPY…CKEI), 199 to 259 (ISTN…YNDL), and 268 to 328 (MRRS…FAES). Residues isoleucine 47, arginine 150, arginine 151, 171-174 (TQYR), 227-228 (SS), and 297-299 (RVH) each bind ADP. Arginine 150 is an AMP binding site. An ATP-binding site is contributed by arginine 150. 227 to 228 (SS) is an AMP binding site. 227–228 (SS) is an ATP binding site. Residues arginine 300 and 313–318 (VLTLSD) each bind ATP. 315-318 (TLSD) contacts ADP. AMP is bound at residue 315–318 (TLSD).

It belongs to the 5'-AMP-activated protein kinase gamma subunit family. As to quaternary structure, AMPK is a heterotrimer of an alpha catalytic subunit, a beta and a gamma non-catalytic subunits.

The protein resides in the nucleus. The protein localises to the cytoplasm. In terms of biological role, adenine nucleotides-binding subunit gamma of AMP-activated protein kinase (AMPK), an energy sensor protein kinase that plays a key role in regulating cellular energy metabolism. In response to reduction of intracellular ATP levels, AMPK activates energy-producing pathways and inhibits energy-consuming processes: inhibits protein, carbohydrate and lipid biosynthesis, as well as cell growth and proliferation. AMPK acts via direct phosphorylation of metabolic enzymes, and by longer-term effects via phosphorylation of transcription regulators. Gamma non-catalytic subunit mediates binding to AMP, ADP and ATP, leading to activate or inhibit AMPK: AMP-binding results in allosteric activation of alpha catalytic subunit (SNF1) both by inducing phosphorylation and preventing dephosphorylation of catalytic subunits. The chain is 5'-AMP-activated protein kinase subunit gamma (SNF4) from Kluyveromyces lactis (strain ATCC 8585 / CBS 2359 / DSM 70799 / NBRC 1267 / NRRL Y-1140 / WM37) (Yeast).